The following is a 553-amino-acid chain: Efflux pump mlcE (553 aa).

Over residues 1-19 (MSEPLPPKEGEPRPQKEES) the composition is skewed to basic and acidic residues. The disordered stretch occupies residues 1–29 (MSEPLPPKEGEPRPQKEESQNDTLEATES). N-linked (GlcNAc...) asparagine glycosylation is present at Asn21. The next 13 helical transmembrane spans lie at 41–61 (LVVA…SIIV), 77–96 (VGWY…PLAG), 101–121 (LLGL…GSVL), 136–156 (AVAG…LSTA), 164–184 (VLIG…PLLG), 196–216 (CFYI…VITI), 245–265 (LVGF…LEWG), 273–293 (SSVI…FVLW), 319–339 (LFMG…PIYF), 352–372 (VYML…GFAI), 376–396 (GYYL…AGLV), 440–460 (ALGI…FLDF), and 516–536 (TFYL…GMGW). N-linked (GlcNAc...) asparagine glycosylation occurs at Asn543.

The protein belongs to the major facilitator superfamily. TCR/Tet family.

The protein localises to the membrane. Efflux pump; part of the gene cluster that mediates the biosynthesis of compactin, also known as mevastatin or ML-236B, and which acts as a potent competitive inhibitor of HMG-CoA reductase. The chain is Efflux pump mlcE from Penicillium citrinum.